A 1001-amino-acid chain; its full sequence is Ankyrin repeat domain-containing protein 35 (1001 aa).

ANK repeat units follow at residues 53–82, 86–115, 119–148, 152–181, 185–214, and 218–247; these read NGQS…DINS, DGST…NEDA, ENRS…FLDV, DGRT…RVNV, NDKS…DAGA, and TGHD…RRRR. Disordered regions lie at residues 256–296, 352–482, and 559–601; these read PDLA…PCSE, PRAS…VAEP, and PEVP…ALGG. Over residues 281–295 the composition is skewed to acidic residues; the sequence is PEEEQEEKEDEDPCS. Residues 295–344 adopt a coiled-coil conformation; that stretch reads SEEWRWKYEEERRKVVRLEQELVQKTEECKTQAAAYLDLENQIREQAQEL. Residues 402-422 show a composition bias toward basic and acidic residues; sequence KKAEDSAPGKIQYEVHGRSQP. Residues 423 to 434 are compositionally biased toward low complexity; the sequence is EEQGPPQSPASE. Over residues 440-450 the composition is skewed to polar residues; it reads TGQQLTTNGAQ. The span at 579–588 shows a compositional bias: basic and acidic residues; that stretch reads KQDEEKEKRV. 3 coiled-coil regions span residues 610–696, 733–810, and 851–968; these read KGQL…LLAS, ISTL…IGKL, and QELK…HEEI. The interval 879 to 902 is disordered; sequence RRSGDLAAQAAEQERQASEMRGRS. Residues 890 to 902 are compositionally biased toward basic and acidic residues; that stretch reads EQERQASEMRGRS.

The sequence is that of Ankyrin repeat domain-containing protein 35 (ANKRD35) from Homo sapiens (Human).